We begin with the raw amino-acid sequence, 206 residues long: Imidazoleglycerol-phosphate dehydratase (206 aa).

The disordered stretch occupies residues 1-21 (MTALDSSRLLQPRTASVHRRT).

Belongs to the imidazoleglycerol-phosphate dehydratase family.

Its subcellular location is the cytoplasm. It catalyses the reaction D-erythro-1-(imidazol-4-yl)glycerol 3-phosphate = 3-(imidazol-4-yl)-2-oxopropyl phosphate + H2O. Its pathway is amino-acid biosynthesis; L-histidine biosynthesis; L-histidine from 5-phospho-alpha-D-ribose 1-diphosphate: step 6/9. The polypeptide is Imidazoleglycerol-phosphate dehydratase (Synechococcus sp. (strain JA-2-3B'a(2-13)) (Cyanobacteria bacterium Yellowstone B-Prime)).